The primary structure comprises 634 residues: MSKPEVENLFSLCDSESKGYLTMEDLRKVCPQLDDNDLRFIFTELDQDGSGKIEKLEFLRGFQDTVQHGESHGLNGMQRRASVAVEDPPMFLRDEQMFDSESDSTSSRPAIRVFDEEHYHSESDTNINIDFSVPCQEEVLVLYEQLQSSGVPALLRKFERVVGSFHKELSEKKHENERLQRIYASEREMYNRRMEEMESEVDQQLELTEMKARQEERDRLTKEKEEMRQRMSDEMSEMRNNIERLQKMEKALERENERLNHQKELSDKLKVVNEENNDLRQNLAENHLELAMIKSELAQVRCEFDQKQDELSARRDQASHATEESESVRKQLQLLFDANRKLHETNESLRDALDSRASVLRQFNLRTPSPGLLSSNRNSVENFQTSTNVFRSVPLHAISTEEQVPETSLILDDAHSLQGLDTPGDLMGLNDANGPAERTFRIVMCGDAAVGKSSFVMRVIRRQFTNQLPSTLGVDFHVKTVNVDGRNVALQLWDTAGQERFRSLCKSYFRRADGAILVYDVCAEQSFLRVRDWIETIKESTERSIPIILVGNKVDMRISTPGSVAKTDGASMAAAMGVLFMETSALDGSNIDNAMLALTRELMAVEDVEIRSTGVVLNPAVAKKGGCFSKCRGS.

2 EF-hand domains span residues 5–33 (EVEN…CPQL) and 33–68 (LDDN…TVQH). Ca(2+) contacts are provided by Asp46, Asp48, Ser50, Lys52, and Glu57. Residues 169–310 (LSEKKHENER…RCEFDQKQDE (142 aa)) are a coiled coil. Residues 212–234 (ARQEERDRLTKEKEEMRQRMSDE) form a disordered region. GTP is bound by residues 449 to 454 (AVGKSS), 552 to 555 (NKVD), and 585 to 586 (AL). A propeptide spans 632–634 (RGS) (removed in mature form).

This sequence belongs to the small GTPase superfamily. Rab family. Homodimer.

It localises to the cytoplasm. Its subcellular location is the perinuclear region. Its function is as follows. Binds GTP and GDP. Plays a role in uterine seam cell development. The sequence is that of Ras and EF-hand domain-containing protein homolog from Caenorhabditis elegans.